Here is a 275-residue protein sequence, read N- to C-terminus: Urease accessory protein UreD (275 aa).

Belongs to the UreD family. In terms of assembly, ureD, UreF and UreG form a complex that acts as a GTP-hydrolysis-dependent molecular chaperone, activating the urease apoprotein by helping to assemble the nickel containing metallocenter of UreC. The UreE protein probably delivers the nickel.

Its subcellular location is the cytoplasm. In terms of biological role, required for maturation of urease via the functional incorporation of the urease nickel metallocenter. In Cereibacter sphaeroides (strain ATCC 17023 / DSM 158 / JCM 6121 / CCUG 31486 / LMG 2827 / NBRC 12203 / NCIMB 8253 / ATH 2.4.1.) (Rhodobacter sphaeroides), this protein is Urease accessory protein UreD.